We begin with the raw amino-acid sequence, 380 residues long: Probable dual-specificity RNA methyltransferase RlmN (380 aa).

The active-site Proton acceptor is glutamate 123. The Radical SAM core domain maps to 129–362 (HEYGNSVCVT…VTIRREQGSD (234 aa)). Cysteine 136 and cysteine 367 are joined by a disulfide. [4Fe-4S] cluster-binding residues include cysteine 143, cysteine 147, and cysteine 150. Residues 193–194 (GE), serine 225, 248–250 (SLH), and asparagine 324 each bind S-adenosyl-L-methionine. Catalysis depends on cysteine 367, which acts as the S-methylcysteine intermediate.

This sequence belongs to the radical SAM superfamily. RlmN family. Requires [4Fe-4S] cluster as cofactor.

It is found in the cytoplasm. It carries out the reaction adenosine(2503) in 23S rRNA + 2 reduced [2Fe-2S]-[ferredoxin] + 2 S-adenosyl-L-methionine = 2-methyladenosine(2503) in 23S rRNA + 5'-deoxyadenosine + L-methionine + 2 oxidized [2Fe-2S]-[ferredoxin] + S-adenosyl-L-homocysteine. It catalyses the reaction adenosine(37) in tRNA + 2 reduced [2Fe-2S]-[ferredoxin] + 2 S-adenosyl-L-methionine = 2-methyladenosine(37) in tRNA + 5'-deoxyadenosine + L-methionine + 2 oxidized [2Fe-2S]-[ferredoxin] + S-adenosyl-L-homocysteine. Specifically methylates position 2 of adenine 2503 in 23S rRNA and position 2 of adenine 37 in tRNAs. The chain is Probable dual-specificity RNA methyltransferase RlmN from Lysinibacillus sphaericus (strain C3-41).